Here is a 200-residue protein sequence, read N- to C-terminus: Charged multivesicular body protein 6 (200 aa).

G2 is lipidated: N-myristoyl glycine. A coiled-coil region spans residues 10 to 145; sequence QSRVTEQDRA…YQRQIDELLA (136 aa). Phosphoserine is present on S119. Position 130 is a phosphothreonine (T130). The Type-2 MIT-interacting motif signature appears at 168–179; it reads MELPEVPSEPLP. A disordered region spans residues 168 to 200; sequence MELPEVPSEPLPDRNPEAPAKARSRQAELVAAS.

Belongs to the SNF7 family. Probable core component of the endosomal sorting required for transport complex III (ESCRT-III). ESCRT-III components are thought to multimerize to form a flat lattice on the perimeter membrane of the endosome. Several assembly forms of ESCRT-III may exist that interact and act sequentially. Interacts with VPS4A; the interaction is direct. Interacts with VPS4B; the interaction is direct. Interacts with CHMP4A, CHMP4B and CHMP4C. Interacts with SNF8, VPS25 and VPS36. ISGylated in a CHMP5-dependent manner. Isgylation weakens its interaction with VPS4A.

Its subcellular location is the endomembrane system. The protein localises to the endosome membrane. It is found in the late endosome membrane. It localises to the membrane. Functionally, probable core component of the endosomal sorting required for transport complex III (ESCRT-III) which is involved in multivesicular bodies (MVBs) formation and sorting of endosomal cargo proteins into MVBs. MVBs contain intraluminal vesicles (ILVs) that are generated by invagination and scission from the limiting membrane of the endosome and mostly are delivered to lysosomes enabling degradation of membrane proteins, such as stimulated growth factor receptors, lysosomal enzymes and lipids. The MVB pathway appears to require the sequential function of ESCRT-O, -I,-II and -III complexes. ESCRT-III proteins mostly dissociate from the invaginating membrane before the ILV is released. The ESCRT machinery also functions in topologically equivalent membrane fission events, such as the terminal stages of cytokinesis. ESCRT-III proteins are believed to mediate the necessary vesicle extrusion and/or membrane fission activities, possibly in conjunction with the AAA ATPase VPS4. In the ESCRT-III complex, it probably serves as an acceptor for the ESCRT-II complex on endosomal membranes. The sequence is that of Charged multivesicular body protein 6 (Chmp6) from Mus musculus (Mouse).